Consider the following 612-residue polypeptide: MSTSFQEFKAFCNKVGLDFQWLNLQSSKSVPENGSSEGFSAVSDTVQENIRPATEPLNVNQSKDPVSNFFYDVKNAPLWNVYKRNHSGHSSAEACSGVSSRQAPKNIPEAMVKETVLSNHDNVTIINELLPTSSAMHQEESTAMTTSYLLSHSVNDTCNVMFSSSSHNRAMLPSSLVQRNNATTSPTTDSASENNESVPSLTSSVSTSSSVYSSWNPPHSPHISSFPDGNFASLNAEVTCFDFRRTKDSRTKETNESIIPTEIYCPTNSTDHHKHYPSRKSKQDACAPAPCNQNISCSVVSTAEFSQSNHTLTTVVPSYMQQYLDRPQNWFESKMGKYCPLFLRSTKNIDYDSLEFKFERKMIAVQYLLLDEQSEPRRYYNPSNKSIPFWKRPFNFDTMPSYDQLMEEAECRFYSYQYKYEGFQRIEPYSISCPWKNTQREIDLVLDHIHFSLDVGEKKSLNRKGNITLDTLDSKVDPNIQIKPYQIFPSNNLVYEGLPHPAEQSLILSPDTSLIERAFQALIDICKESIPSSNDCSTRNNNSAPQLTVPEPSKPCRLLLVRESRTATELKTNKKLWLHSQRRNIEVTVPMHPSERGTKSWLRKWLSTFVHQ.

The segment covering 176–196 (LVQRNNATTSPTTDSASENNE) has biased composition (polar residues). Residues 176 to 203 (LVQRNNATTSPTTDSASENNESVPSLTS) form a disordered region.

To yeast YNL034w.

This is an uncharacterized protein from Saccharomyces cerevisiae (strain ATCC 204508 / S288c) (Baker's yeast).